Reading from the N-terminus, the 333-residue chain is tRNA U34 carboxymethyltransferase (333 aa).

Carboxy-S-adenosyl-L-methionine is bound by residues Lys97, Trp111, Lys116, Gly136, 158–160 (DPS), 189–190 (IE), Met205, Tyr209, and Arg324.

Belongs to the class I-like SAM-binding methyltransferase superfamily. CmoB family. Homotetramer.

It carries out the reaction carboxy-S-adenosyl-L-methionine + 5-hydroxyuridine(34) in tRNA = 5-carboxymethoxyuridine(34) in tRNA + S-adenosyl-L-homocysteine + H(+). Functionally, catalyzes carboxymethyl transfer from carboxy-S-adenosyl-L-methionine (Cx-SAM) to 5-hydroxyuridine (ho5U) to form 5-carboxymethoxyuridine (cmo5U) at position 34 in tRNAs. The polypeptide is tRNA U34 carboxymethyltransferase (Chromohalobacter salexigens (strain ATCC BAA-138 / DSM 3043 / CIP 106854 / NCIMB 13768 / 1H11)).